Reading from the N-terminus, the 945-residue chain is Isoleucine--tRNA ligase (945 aa).

The 'HIGH' region signature appears at 66–76; the sequence is PYANGDIHLGH. Position 581 (Glu581) interacts with L-isoleucyl-5'-AMP. The short motif at 622 to 626 is the 'KMSKS' region element; that stretch reads KMSKS. Lys625 contributes to the ATP binding site. Zn(2+)-binding residues include Cys908, Cys911, Cys928, and Cys931.

This sequence belongs to the class-I aminoacyl-tRNA synthetase family. IleS type 1 subfamily. Monomer. It depends on Zn(2+) as a cofactor.

The protein localises to the cytoplasm. It catalyses the reaction tRNA(Ile) + L-isoleucine + ATP = L-isoleucyl-tRNA(Ile) + AMP + diphosphate. Functionally, catalyzes the attachment of isoleucine to tRNA(Ile). As IleRS can inadvertently accommodate and process structurally similar amino acids such as valine, to avoid such errors it has two additional distinct tRNA(Ile)-dependent editing activities. One activity is designated as 'pretransfer' editing and involves the hydrolysis of activated Val-AMP. The other activity is designated 'posttransfer' editing and involves deacylation of mischarged Val-tRNA(Ile). The polypeptide is Isoleucine--tRNA ligase (Burkholderia lata (strain ATCC 17760 / DSM 23089 / LMG 22485 / NCIMB 9086 / R18194 / 383)).